Here is a 388-residue protein sequence, read N- to C-terminus: Chorismate synthase (388 aa).

Arg-39 and Arg-45 together coordinate NADP(+). FMN-binding positions include 130–132 (RSS), 251–252 (NA), Gly-296, 311–315 (KPIPT), and Arg-337.

The protein belongs to the chorismate synthase family. As to quaternary structure, homotetramer. FMNH2 serves as cofactor.

The catalysed reaction is 5-O-(1-carboxyvinyl)-3-phosphoshikimate = chorismate + phosphate. It functions in the pathway metabolic intermediate biosynthesis; chorismate biosynthesis; chorismate from D-erythrose 4-phosphate and phosphoenolpyruvate: step 7/7. Functionally, catalyzes the anti-1,4-elimination of the C-3 phosphate and the C-6 proR hydrogen from 5-enolpyruvylshikimate-3-phosphate (EPSP) to yield chorismate, which is the branch point compound that serves as the starting substrate for the three terminal pathways of aromatic amino acid biosynthesis. This reaction introduces a second double bond into the aromatic ring system. The chain is Chorismate synthase from Streptococcus mutans serotype c (strain ATCC 700610 / UA159).